The chain runs to 255 residues: Type III pantothenate kinase (255 aa).

An ATP-binding site is contributed by 6-13 (DIGNSNID). 107 to 110 (GADL) is a substrate binding site. Aspartate 109 functions as the Proton acceptor in the catalytic mechanism. Residue aspartate 129 coordinates K(+). Threonine 132 provides a ligand contact to ATP. Threonine 183 provides a ligand contact to substrate.

Belongs to the type III pantothenate kinase family. As to quaternary structure, homodimer. NH4(+) serves as cofactor. The cofactor is K(+).

It is found in the cytoplasm. It catalyses the reaction (R)-pantothenate + ATP = (R)-4'-phosphopantothenate + ADP + H(+). It participates in cofactor biosynthesis; coenzyme A biosynthesis; CoA from (R)-pantothenate: step 1/5. Catalyzes the phosphorylation of pantothenate (Pan), the first step in CoA biosynthesis. This Dictyoglomus turgidum (strain DSM 6724 / Z-1310) protein is Type III pantothenate kinase.